Reading from the N-terminus, the 432-residue chain is Adenylosuccinate synthetase (432 aa).

GTP is bound by residues 12–18 and 40–42; these read GDEGKGK and GHT. D13 (proton acceptor) is an active-site residue. Mg(2+) is bound by residues D13 and G40. Residues 13 to 16, 38 to 41, T130, R144, Q225, T240, and R304 each bind IMP; these read DEGK and NAGH. Residue H41 is the Proton donor of the active site. Residue 300–306 participates in substrate binding; that stretch reads STTGRPR. GTP is bound by residues R306, 332-334, and 414-416; these read KLD and SVG.

The protein belongs to the adenylosuccinate synthetase family. Homodimer. Mg(2+) is required as a cofactor.

It is found in the cytoplasm. It carries out the reaction IMP + L-aspartate + GTP = N(6)-(1,2-dicarboxyethyl)-AMP + GDP + phosphate + 2 H(+). It functions in the pathway purine metabolism; AMP biosynthesis via de novo pathway; AMP from IMP: step 1/2. Functionally, plays an important role in the de novo pathway of purine nucleotide biosynthesis. Catalyzes the first committed step in the biosynthesis of AMP from IMP. The polypeptide is Adenylosuccinate synthetase (Geobacter sp. (strain M21)).